The following is a 474-amino-acid chain: Crocetin glucosyltransferase, chloroplastic (474 aa).

A chloroplast-targeting transit peptide spans 1–45 (MVQQRHVLLITYPAQGHINPALQFAQRLLRMGIQVTLATSVYALS). The active-site Proton acceptor is the histidine 17. Position 17 (histidine 17) interacts with an anthocyanidin. 8 residues coordinate UDP-alpha-D-glucose: glutamine 346, histidine 361, tryptophan 364, asparagine 365, serine 366, glutamate 369, aspartate 385, and glutamine 386.

This sequence belongs to the UDP-glycosyltransferase family. Ubiquitous.

Its subcellular location is the plastid. It is found in the chloroplast. It catalyses the reaction crocetin + UDP-alpha-D-glucose = beta-D-glucosyl crocetin + UDP. The catalysed reaction is beta-D-glucosyl crocetin + UDP-alpha-D-glucose = bis(beta-D-glucosyl) crocetin + UDP. The enzyme catalyses beta-D-gentiobiosyl crocetin + UDP-alpha-D-glucose = beta-D-gentiobiosyl beta-D-glucosyl crocetin + UDP. Functionally, glucosyltransferase acting on a broad range of substrates, including crocetin, 4-coumaric acid, caffeic acid and ferulic acid. No activity with indol-3-acetic acid, bixin and norbixin, and no formation of O-glucosides. Involved with UGT94E5 in sequential glycosylation of crocetin to crocin (bis(beta-D-gentiobiosyl) crocetin). This chain is Crocetin glucosyltransferase, chloroplastic (UGT75L6), found in Gardenia jasminoides (Cape jasmine).